The chain runs to 258 residues: Synaptosomal-associated protein 29 (258 aa).

The tract at residues 1-41 (MSAYPKSYNPFDDDGEDEGARPAPWRDARDLPDGPDAPADR) is disordered. Residues 18–32 (EGARPAPWRDARDLP) are compositionally biased toward basic and acidic residues. The stretch at 76–107 (ASSEELARQRGVLERTEKMVDKMDQDLKISQK) forms a coiled coil. Phosphoserine is present on residues Ser-77, Ser-78, and Ser-114. A phosphothreonine mark is found at Thr-130 and Thr-137. The disordered stretch occupies residues 150–191 (ISTSKEQEAKYQASHPNLRKLDDTDPVPRGAGSAMSTDAYPK). Phosphoserine occurs at positions 163, 182, 185, 204, and 210. Residues 196 to 258 (RAYHQKIDSN…KSTERKVRQL (63 aa)) enclose the t-SNARE coiled-coil homology domain.

This sequence belongs to the SNAP-25 family. In terms of assembly, forms a SNARE complex, composed of VAMP8, SNAP29 and STX17, involved in fusion of autophagosome with lysosome. Interacts with multiple syntaxins including STX6. Interacts with EIPR1. Interacts with STX17; this interaction is increased in the absence of TMEM39A. As to quaternary structure, (Microbial infection) Interacts with Hantaan hantavirus nucleoprotein; this interaction prevents the breakdown of the viral glycoprotein N by virus-triggered autophagy. (Microbial infection) The interaction with STX17 is decreased in presence of SARS coronavirus-2/SARS-CoV-2 ORF3A protein. As to expression, found in brain, heart, kidney, liver, lung, placenta, skeletal muscle, spleen and pancreas.

The protein localises to the cytoplasm. Its subcellular location is the golgi apparatus membrane. It is found in the cytoplasmic vesicle. The protein resides in the autophagosome membrane. It localises to the cell projection. The protein localises to the cilium membrane. In terms of biological role, SNAREs, soluble N-ethylmaleimide-sensitive factor-attachment protein receptors, are essential proteins for fusion of cellular membranes. SNAREs localized on opposing membranes assemble to form a trans-SNARE complex, an extended, parallel four alpha-helical bundle that drives membrane fusion. SNAP29 is a SNARE involved in autophagy through the direct control of autophagosome membrane fusion with the lysososome membrane. Also plays a role in ciliogenesis by regulating membrane fusions. The chain is Synaptosomal-associated protein 29 from Homo sapiens (Human).